Reading from the N-terminus, the 382-residue chain is Porin-like protein BU359 (382 aa).

Residues 1-23 (MTNRKSLAMVIPMLLAASNGVNA) form the signal peptide.

Belongs to the Gram-negative porin family. As to quaternary structure, homotrimer.

It is found in the cell outer membrane. In terms of biological role, forms pores that allow passive diffusion of small molecules across the membrane. This Buchnera aphidicola subsp. Acyrthosiphon pisum (strain APS) (Acyrthosiphon pisum symbiotic bacterium) protein is Porin-like protein BU359.